The sequence spans 464 residues: Mitogen-activated protein kinase 10 (464 aa).

One can recognise a Protein kinase domain in the interval 64–359; the sequence is YQNLKPIGSG…VDDALQHPYI (296 aa). Residues 70-78 and lysine 93 contribute to the ATP site; that span reads IGSGAQGIV. Catalysis depends on aspartate 189, which acts as the Proton acceptor. The residue at position 221 (threonine 221) is a Phosphothreonine; by MAP2K7. The short motif at 221–223 is the TXY element; the sequence is TPY. Tyrosine 223 carries the phosphotyrosine; by MAP2K4 modification. A disordered region spans residues 405-464; that stretch reads TKNGVVKGQPSPSGAAVNSSESLPPSSSVNDISSMSTDQTLASDTDSSLEASAGPLGCCR. Over residues 423–432 the composition is skewed to low complexity; the sequence is SSESLPPSSS. Over residues 433 to 454 the composition is skewed to polar residues; that stretch reads VNDISSMSTDQTLASDTDSSLE. Residues cysteine 462 and cysteine 463 are each lipidated (S-palmitoyl cysteine).

This sequence belongs to the protein kinase superfamily. CMGC Ser/Thr protein kinase family. MAP kinase subfamily. In terms of assembly, interacts with MAPK8IP1/JIP-1 and MAPK8IP3/JIP-3/JSAP1. Interacts with SPAG9/MAPK8IP4/JIP4. Interacts with HDAC9 and MAPKBP1. Interacts with ARRB2; the interaction enhances MAPK10 activation by MAP3K5. Interacts with SARM1. Interacts with JUND; interaction is inhibited in the presence of MEN1. The cofactor is Mg(2+). Post-translationally, dually phosphorylated on Thr-221 and Tyr-223 by MAP2K4 and MAP2K7, which activates the enzyme. MAP2K7 shows a strong preference for Thr-221 while MAP2K4 phosphorylates Tyr-223 preferentially. Weakly autophosphorylated on threonine and tyrosine residues in vitro. Palmitoylation regulates subcellular location and axonal development.

It is found in the cytoplasm. It localises to the membrane. The protein localises to the nucleus. Its subcellular location is the mitochondrion. The enzyme catalyses L-seryl-[protein] + ATP = O-phospho-L-seryl-[protein] + ADP + H(+). It carries out the reaction L-threonyl-[protein] + ATP = O-phospho-L-threonyl-[protein] + ADP + H(+). With respect to regulation, activated by threonine and tyrosine phosphorylation by two dual specificity kinases, MAP2K4 and MAP2K7. MAP2K7 phosphorylates MAPK10 on Thr-221 causing a conformational change and a large increase in Vmax for the enzyme. MAP2K4 then phosphorylates Tyr-223 resulting in a further increase in Vmax. Inhibited by dual specificity phosphatases, such as DUSP1. Inhibited by HDAC9. Serine/threonine-protein kinase involved in various processes such as neuronal proliferation, differentiation, migration and programmed cell death. Extracellular stimuli such as pro-inflammatory cytokines or physical stress stimulate the stress-activated protein kinase/c-Jun N-terminal kinase (SAP/JNK) signaling pathway. In this cascade, two dual specificity kinases MAP2K4/MKK4 and MAP2K7/MKK7 phosphorylate and activate MAPK10/JNK3. In turn, MAPK10/JNK3 phosphorylates a number of transcription factors, primarily components of AP-1 such as JUN and ATF2 and thus regulates AP-1 transcriptional activity. Plays regulatory roles in the signaling pathways during neuronal apoptosis. Phosphorylates the neuronal microtubule regulator STMN2. Acts in the regulation of the amyloid-beta precursor protein/APP signaling during neuronal differentiation by phosphorylating APP. Also participates in neurite growth in spiral ganglion neurons. Phosphorylates the CLOCK-BMAL1 heterodimer and plays a role in the photic regulation of the circadian clock. Phosphorylates JUND and this phosphorylation is inhibited in the presence of MEN1. The chain is Mitogen-activated protein kinase 10 (Mapk10) from Rattus norvegicus (Rat).